The sequence spans 421 residues: Putative bifunctional polynucleotide phosphatase/kinase (421 aa).

Residues 25–231 (DSYLKGIINN…SENLKTNYKL (207 aa)) form a phosphatase region. Residues 235–415 (NPTEIIDEIE…DDPKWKRSFM (181 aa)) are kinase. An ATP-binding site is contributed by 265 to 272 (GQPGSGKS).

It in the N-terminal section; belongs to the DNA 3' phosphatase family.

The enzyme catalyses a 3'end (2'-deoxyribonucleotide 3'-phosphate)-DNA + H2O = a 3'-end 2'-deoxyribonucleotide-DNA + phosphate. It catalyses the reaction a 5'-end dephospho-2'-deoxyribonucleoside-DNA + ATP = a 5'-end 5'-phospho-2'-deoxyribonucleoside-DNA + ADP + H(+). In Acanthamoeba polyphaga mimivirus (APMV), this protein is Putative bifunctional polynucleotide phosphatase/kinase.